Reading from the N-terminus, the 91-residue chain is Small ribosomal subunit protein uS19 (91 aa).

It belongs to the universal ribosomal protein uS19 family.

Its function is as follows. Protein S19 forms a complex with S13 that binds strongly to the 16S ribosomal RNA. The protein is Small ribosomal subunit protein uS19 of Pseudoalteromonas atlantica (strain T6c / ATCC BAA-1087).